The chain runs to 354 residues: uncharacterized protein (354 aa).

Polar residues predominate over residues 309–326 (VNSANSINTANTRSQTGG). Positions 309–333 (VNSANSINTANTRSQTGGQDEEDFE) are disordered. A coiled-coil region spans residues 326-353 (GQDEEDFEKKYKKYKNKYAKLKNQKTSN).

The protein localises to the virion. This is an uncharacterized protein from Acanthamoeba polyphaga (Amoeba).